A 170-amino-acid chain; its full sequence is Protein-export protein SecB (170 aa).

Belongs to the SecB family. Homotetramer, a dimer of dimers. One homotetramer interacts with 1 SecA dimer.

The protein localises to the cytoplasm. Functionally, one of the proteins required for the normal export of preproteins out of the cell cytoplasm. It is a molecular chaperone that binds to a subset of precursor proteins, maintaining them in a translocation-competent state. It also specifically binds to its receptor SecA. The chain is Protein-export protein SecB from Xanthomonas axonopodis pv. citri (strain 306).